A 939-amino-acid chain; its full sequence is Isoleucine--tRNA ligase (939 aa).

A 'HIGH' region motif is present at residues 58-68; the sequence is PYANGDIHIGH. Residue Glu-574 participates in L-isoleucyl-5'-AMP binding. A 'KMSKS' region motif is present at residues 615-619; it reads KMSKS. ATP is bound at residue Lys-618. Zn(2+) contacts are provided by Cys-902, Cys-905, Cys-922, and Cys-925.

The protein belongs to the class-I aminoacyl-tRNA synthetase family. IleS type 1 subfamily. Monomer. Zn(2+) is required as a cofactor.

It is found in the cytoplasm. The enzyme catalyses tRNA(Ile) + L-isoleucine + ATP = L-isoleucyl-tRNA(Ile) + AMP + diphosphate. In terms of biological role, catalyzes the attachment of isoleucine to tRNA(Ile). As IleRS can inadvertently accommodate and process structurally similar amino acids such as valine, to avoid such errors it has two additional distinct tRNA(Ile)-dependent editing activities. One activity is designated as 'pretransfer' editing and involves the hydrolysis of activated Val-AMP. The other activity is designated 'posttransfer' editing and involves deacylation of mischarged Val-tRNA(Ile). This chain is Isoleucine--tRNA ligase, found in Aromatoleum aromaticum (strain DSM 19018 / LMG 30748 / EbN1) (Azoarcus sp. (strain EbN1)).